We begin with the raw amino-acid sequence, 529 residues long: Chaperonin GroEL, chloroplastic (529 aa).

ATP contacts are provided by residues 29–32 (TLGP), 86–90 (DGTTT), Gly414, 480–482 (DAA), and Asp496.

It belongs to the chaperonin (HSP60) family. Forms a cylinder of 14 subunits composed of two heptameric rings stacked back-to-back. Interacts with the co-chaperonin GroES.

Its subcellular location is the plastid. The protein localises to the chloroplast. The enzyme catalyses ATP + H2O + a folded polypeptide = ADP + phosphate + an unfolded polypeptide.. Its function is as follows. Together with its co-chaperonin GroES, plays an essential role in assisting protein folding. The GroEL-GroES system forms a nano-cage that allows encapsulation of the non-native substrate proteins and provides a physical environment optimized to promote and accelerate protein folding. The polypeptide is Chaperonin GroEL, chloroplastic (Guillardia theta (Cryptophyte)).